The sequence spans 381 residues: Dual-specificity RNA methyltransferase RlmN (381 aa).

Glutamate 96 acts as the Proton acceptor in catalysis. The 241-residue stretch at 102–342 folds into the Radical SAM core domain; that stretch reads TDDRGTLCVS…TRTTRGDDID (241 aa). Cysteine 109 and cysteine 345 are disulfide-bonded. Positions 116, 120, and 123 each coordinate [4Fe-4S] cluster. Residues 170 to 171, serine 202, 224 to 226, and asparagine 302 contribute to the S-adenosyl-L-methionine site; these read GE and SLH. The active-site S-methylcysteine intermediate is cysteine 345.

The protein belongs to the radical SAM superfamily. RlmN family. [4Fe-4S] cluster is required as a cofactor.

It is found in the cytoplasm. The enzyme catalyses adenosine(2503) in 23S rRNA + 2 reduced [2Fe-2S]-[ferredoxin] + 2 S-adenosyl-L-methionine = 2-methyladenosine(2503) in 23S rRNA + 5'-deoxyadenosine + L-methionine + 2 oxidized [2Fe-2S]-[ferredoxin] + S-adenosyl-L-homocysteine. The catalysed reaction is adenosine(37) in tRNA + 2 reduced [2Fe-2S]-[ferredoxin] + 2 S-adenosyl-L-methionine = 2-methyladenosine(37) in tRNA + 5'-deoxyadenosine + L-methionine + 2 oxidized [2Fe-2S]-[ferredoxin] + S-adenosyl-L-homocysteine. Functionally, specifically methylates position 2 of adenine 2503 in 23S rRNA and position 2 of adenine 37 in tRNAs. m2A2503 modification seems to play a crucial role in the proofreading step occurring at the peptidyl transferase center and thus would serve to optimize ribosomal fidelity. In Pseudomonas putida (strain W619), this protein is Dual-specificity RNA methyltransferase RlmN.